A 515-amino-acid polypeptide reads, in one-letter code: 1-pyrroline-5-carboxylate dehydrogenase 1 (515 aa).

Catalysis depends on residues E286 and C320.

Belongs to the aldehyde dehydrogenase family. RocA subfamily.

It catalyses the reaction L-glutamate 5-semialdehyde + NAD(+) + H2O = L-glutamate + NADH + 2 H(+). It functions in the pathway amino-acid degradation; L-proline degradation into L-glutamate; L-glutamate from L-proline: step 2/2. This is 1-pyrroline-5-carboxylate dehydrogenase 1 (rocA1) from Halalkalibacterium halodurans (strain ATCC BAA-125 / DSM 18197 / FERM 7344 / JCM 9153 / C-125) (Bacillus halodurans).